A 1324-amino-acid polypeptide reads, in one-letter code: Ubiquitin carboxyl-terminal hydrolase 42 (1324 aa).

2 disordered regions span residues 1–38 (MTIVDKASESSDPSAYQNQPGSSEAVSPGDMDAGSASW) and 63–87 (YSSSSVPDKSKPSPQKDQALGDGIA). The span at 10–25 (SSDPSAYQNQPGSSEA) shows a compositional bias: polar residues. A compositionally biased stretch (low complexity) spans 63-80 (YSSSSVPDKSKPSPQKDQ). Serine 75 carries the phosphoserine modification. Residues 111–412 (AGLQNLGNTC…QAYVLFYIRS (302 aa)) form the USP domain. The active-site Nucleophile is cysteine 120. Histidine 371 (proton acceptor) is an active-site residue. 6 disordered regions span residues 452–494 (IGPQ…NRAS), 536–707 (QSQP…MPAP), 722–1026 (LSNK…RHRS), 1085–1131 (RAGL…HPDR), 1149–1254 (DRFH…VKDS), and 1275–1294 (GGFPLSGGPPLEGVGPFREK). Residues 477–489 (PSSSMSSPNGNSS) are compositionally biased toward low complexity. Residue serine 483 is modified to Phosphoserine. Residues 536-564 (QSQPNLHSNSLENPTKPVPSSTITNSAVQ) are compositionally biased toward polar residues. Over residues 565–576 (STSNASTMSVSS) the composition is skewed to low complexity. Residues 586-603 (ESCSQPVMNGKSKLNSSV) are compositionally biased toward polar residues. Phosphoserine is present on residues serine 754 and serine 856. Basic and acidic residues-rich tracts occupy residues 938-974 (AKEKIGSLRKVDRGHYRSRRERSSSGEPARESRSKTE), 984-1013 (CPRERDRQDRHAPEHHPGHGDRLSPGERRS), 1101-1113 (RGCEPARERERHR), 1149-1158 (DRFHEHENGK), and 1165-1191 (DSVENSDSHVEKKARRSEQKDPLEEPK). Residue serine 1181 is modified to Phosphoserine. Residues 1192–1206 (AKKHKKSKKKKKSKD) show a composition bias toward basic residues. Basic and acidic residues predominate over residues 1207–1218 (KHRDRDSRHQQD). Serine 1219, serine 1222, and serine 1226 each carry phosphoserine. Residues 1231-1245 (HRHKKKKKKKKRHSR) show a composition bias toward basic residues. The residue at position 1247 (serine 1247) is a Phosphoserine.

This sequence belongs to the peptidase C19 family. As to expression, broadly expressed.

The enzyme catalyses Thiol-dependent hydrolysis of ester, thioester, amide, peptide and isopeptide bonds formed by the C-terminal Gly of ubiquitin (a 76-residue protein attached to proteins as an intracellular targeting signal).. In terms of biological role, deubiquitinating enzyme which may play an important role during spermatogenesis. This chain is Ubiquitin carboxyl-terminal hydrolase 42 (USP42), found in Homo sapiens (Human).